A 203-amino-acid polypeptide reads, in one-letter code: Eukaryotic translation initiation factor isoform 4E (203 aa).

The span at 1–25 shows a compositional bias: low complexity; sequence MATETAGAVVESSSAATVPSPAPEA. Residues 1–27 are disordered; the sequence is MATETAGAVVESSSAATVPSPAPEAGS. MRNA-binding positions include 47-52, Lys-79, and 97-98; these read QGAAWG and WE. Cys-102 and Cys-141 are oxidised to a cystine. 148–153 contributes to the mRNA binding site; that stretch reads RQRQDK.

The protein belongs to the eukaryotic initiation factor 4E family. As to quaternary structure, EIF4F is a multi-subunit complex, the composition of which varies with external and internal environmental conditions. It is composed of at least EIF4A, EIF4E and EIF4G. EIF4E is also known to interact with other partners. In higher plants two isoforms of EIF4F have been identified, named isoform EIF4F and isoform EIF(iso)4F. Isoform EIF4F has subunits p220 and p26, whereas isoform EIF(iso)4F has subunits p82 and p28. In terms of assembly, (Microbial infection) Interacts with the potyvirus peanut stripe virus (PStV) helper component proteinase (HC-Pro) in the cytoplasm and with PStV viral genome-linked protein (VPg) in the nucleus; these interactions are possible in susceptible hosts but impaired in resistant plants. In terms of processing, according to the redox status, the Cys-102-Cys-141 disulfide bridge may have a role in regulating protein function by affecting its ability to bind capped mRNA. As to expression, expressed ubiquitously with highest levels in young leaves and roots, and lowest levels in flowers.

Its subcellular location is the cytoplasm. It localises to the nucleus. Functionally, component of the protein complex eIF4F, which is involved in the recognition of the mRNA cap, ATP-dependent unwinding of 5'-terminal secondary structure and recruitment of mRNA to the ribosome. Recognizes and binds the 7-methylguanosine-containing mRNA cap during an early step in the initiation of protein synthesis and facilitates ribosome binding by inducing the unwinding of the mRNAs secondary structures. Key component of recessive resistance to potyviruses such as peanut stripe virus (PStV). (Microbial infection) Susceptibility host factor required for viral infection by recruiting viral RNAs to the host ribosomal complex via an interaction with viral genome-linked protein (VPg). The chain is Eukaryotic translation initiation factor isoform 4E from Arachis hypogaea (Peanut).